The sequence spans 289 residues: Ribonuclease H2 subunit A (289 aa).

Positions Pro-20–Phe-249 constitute an RNase H type-2 domain. The a divalent metal cation site is built by Asp-26, Glu-27, and Asp-134.

The protein belongs to the RNase HII family. Eukaryotic subfamily. Requires Mn(2+) as cofactor. It depends on Mg(2+) as a cofactor.

The enzyme catalyses Endonucleolytic cleavage to 5'-phosphomonoester.. In terms of biological role, endonuclease that specifically degrades the RNA of RNA-DNA hybrids. Participates in DNA replication. This chain is Ribonuclease H2 subunit A (rnaseh2A), found in Dictyostelium discoideum (Social amoeba).